Reading from the N-terminus, the 156-residue chain is Succinate dehydrogenase assembly factor 2-B, mitochondrial (156 aa).

Residues 1–24 (MLRQFIVSTVGRRLQLPMMAQSRL) constitute a mitochondrion transit peptide.

It belongs to the SDHAF2 family. As to quaternary structure, interacts with the flavoprotein subunit within the SDH catalytic dimer.

The protein resides in the mitochondrion matrix. Functionally, plays an essential role in the assembly of succinate dehydrogenase (SDH), an enzyme complex (also referred to as respiratory complex II) that is a component of both the tricarboxylic acid (TCA) cycle and the mitochondrial electron transport chain, and which couples the oxidation of succinate to fumarate with the reduction of ubiquinone (coenzyme Q) to ubiquinol. Required for flavinylation (covalent attachment of FAD) of the flavoprotein subunit of the SDH catalytic dimer. In Drosophila melanogaster (Fruit fly), this protein is Succinate dehydrogenase assembly factor 2-B, mitochondrial.